The chain runs to 289 residues: UPF0761 membrane protein ESA_04062 (289 aa).

A run of 6 helical transmembrane segments spans residues Leu-44–Phe-64, Val-104–Leu-124, Phe-140–Ile-160, Ile-183–Thr-203, Leu-215–Phe-235, and Val-244–Leu-264.

The protein belongs to the UPF0761 family.

It localises to the cell inner membrane. The polypeptide is UPF0761 membrane protein ESA_04062 (Cronobacter sakazakii (strain ATCC BAA-894) (Enterobacter sakazakii)).